We begin with the raw amino-acid sequence, 767 residues long: Cation/H(+) antiporter 27 (767 aa).

The next 11 membrane-spanning stretches (helical) occupy residues 39–59 (LPLLLLQISVFSIFSVSFQFL), 63–83 (FGKFAFLTQMLAGICLGPSVI), 99–119 (VYIIESFEAICFLFICYITTC), 135–155 (INGILLFLIPFVWGQFAAILI), 173–193 (HVAIVQSTMFFQVVYGVLSSL), 205–225 (LASMMVHDCLSWCFFMLNIAI), 242–262 (VLQMIMILVIAYVFRPLMLWM), 280–300 (ICVLLFISCLWAEFVGLPYFF), 323–343 (IGCFVWSVLMPCYVIGIGLNI), 371–391 (IALPSLYYKVPLWHAILVGFI), and 415–435 (KSFGAMVMSATVNSTIFIVIV).

It belongs to the monovalent cation:proton antiporter 2 (CPA2) transporter (TC 2.A.37) family. CHX (TC 2.A.37.4) subfamily. In terms of tissue distribution, specifically expressed in pollen.

The protein resides in the membrane. Functionally, may operate as a cation/H(+) antiporter. This chain is Cation/H(+) antiporter 27 (CHX27), found in Arabidopsis thaliana (Mouse-ear cress).